Here is a 1036-residue protein sequence, read N- to C-terminus: Pre-mRNA-processing factor 39-2 (1036 aa).

A disordered region spans residues 1-24 (MVTTEVRTAVSDKEPLQRSPELDS). HAT repeat units follow at residues 62-94 (DDIE…HKIK), 96-128 (CTLE…FAVA), 131-166 (EDPH…YLLG), 168-201 (QQWS…IAAS), 278-310 (CFET…FGET), and 312-344 (GDFD…FVES). Disordered regions lie at residues 595–618 (GISS…YGTQ), 714–767 (PSGS…PVGT), and 995–1036 (KGDE…ISSI). A compositionally biased stretch (low complexity) spans 714–726 (PSGSQSPQSYQSQ). The span at 740–755 (RDLNQMHRDSKPRSQE) shows a compositional bias: basic and acidic residues. Positions 1002-1036 (SMPQGSTTNSDIQKSQESGAVNEANLSSDTSISSI) are enriched in polar residues.

Belongs to the PRP39 family.

The protein localises to the nucleus. Functionally, involved in pre-mRNA splicing. The polypeptide is Pre-mRNA-processing factor 39-2 (Arabidopsis thaliana (Mouse-ear cress)).